The following is a 230-amino-acid chain: 8-demethylnovobiocic acid C(8)-methyltransferase (230 aa).

It belongs to the methyltransferase superfamily.

It carries out the reaction 8-desmethylnovobiocic acid + S-adenosyl-L-methionine = novobiocic acid + S-adenosyl-L-homocysteine + H(+). It participates in antibiotic biosynthesis; novobiocin biosynthesis. Functionally, C-methyltransferase that methylates 8-demethylnovobiocic acid to produce novobiocic acid in the novobiocin biosynthesis pathway. Novobiocin is an aminocoumarin family antibiotic that targets bacterial DNA gyrases. In Streptomyces niveus (Streptomyces spheroides), this protein is 8-demethylnovobiocic acid C(8)-methyltransferase (novO).